The sequence spans 354 residues: Neutral protease 2 homolog BCIN_12g06300 (354 aa).

The signal sequence occupies residues 1 to 19 (MRSFSKILAVASLAAIANS). A propeptide spanning residues 20–179 (AVLKRDNNVL…PSSIDRRTVL (160 aa)) is cleaved from the precursor. Disulfide bonds link Cys183/Cys255 and Cys262/Cys280. His305 is a Zn(2+) binding site. The active site involves Glu306. Positions 309 and 320 each coordinate Zn(2+).

The protein belongs to the peptidase M35 family. Zn(2+) is required as a cofactor.

Its subcellular location is the secreted. The enzyme catalyses Preferential cleavage of bonds with hydrophobic residues in P1'. Also 3-Asn-|-Gln-4 and 8-Gly-|-Ser-9 bonds in insulin B chain.. Its function is as follows. Secreted metalloproteinase that allows assimilation of proteinaceous substrates. Shows high activities on basic nuclear substrates such as histone and protamine. The protein is Neutral protease 2 homolog BCIN_12g06300 of Botryotinia fuckeliana (strain B05.10) (Noble rot fungus).